The following is a 746-amino-acid chain: Tudor domain-containing protein krimp (746 aa).

The tract at residues 1 to 310 (MNLEDISMIM…RDIYNQILKD (310 aa)) is involved in homooligomerization. Positions 311–489 (MAAFPENTIV…PAGITEDDMA (179 aa)) are non-canonical tudor domain. A C3H1-type zinc finger spans residues 511–540 (KDEQRICRHYDPKLNGCFKGNNCRFAHEPF). The Tudor domain maps to 613–670 (KPRLLDIVLALYSDGCFYRAQIIDEFPSEYMIFYVDYGNTEFVPLSCLAPCENVDSFK).

Belongs to the Tudor domain containing protein family. As to quaternary structure, homooligomerizes (via N-terminus). Component of the ping-pong piRNA processing (4P) complex consisting of krimp, aub and AGO3; a single molecule of krimp can bind both aub and AGO3 without the need for homooligomerization. Interacts (via canonical tudor domain) with aub (via N-terminus when symmetrically dimethylated on arginine residues). Interacts (via non-canonical tudor domain) with AGO3 (via N-terminus when unmethylated on arginine residues); this interaction leads to symmetrical dimethylation on AGO3 arginine residues and its subsequent dissociation from krimp. Krimp associated AGO3 is mostly free of piRNA binding and the interaction plays an important role in the loading of AGO3 with piRNAs; piRNA binding stimulates methylation of ACO3 by the csul/PRMT5 methylosome complex and promotes dissociation of the two proteins. Widely expressed in female germline cells, including differentiating germ cells in germarium and egg chambers (at protein level).

Its subcellular location is the cytoplasm. The protein resides in the perinuclear region. It localises to the cytoplasmic ribonucleoprotein granule. Its function is as follows. Stable structural component of the perinuclear meiotic nuage, a germline-specific subcellular membraneless ribonucleoprotein compartment involved in production of transposable element-repressing Piwi-interacting RNA (piRNA)-induced silencing complexes (piRISCs), which are essential for maintaining germline integrity during oogenesis. Scaffold component of the ping-pong piRNA processing (4P) complex that recruits the Piwi proteins aub and AGO3 to specific subregions of the nuage where it coordinates their activity in the ping-pong amplification step of secondary piRNA biogenesis. Binds methylated aub, which is associated with piRNA, and unmethylated AGO3, which is not associated with piRNA, bringing the Piwi proteins into close proximity and facilitating the loading of freshly cut piRNAs generated by aub onto AGO3. Promotes asymmetric ping-pong amplification by aub and AGO3 to bias production towards antisense piRNAs capable of silencing transposable elements. Required for symmetrical dimethylation of AGO3, probably by recruitment to the nuage where methylosome components are located; dimethylation promotes AGO3 dissociation and interaction with other tudor-domain containing proteins such as tud. Required for the recruitment of mael to the perinuclear meiotic nuage. Required for the recruitment of aub to the nuage in testes but not in ovaries. Involved in repression of long interspersed nuclear elements (LINEs) including HeT-A, I-element LINEs and possibly mst40, but not TART LINEs. The protein is Tudor domain-containing protein krimp of Drosophila melanogaster (Fruit fly).